The primary structure comprises 316 residues: MKRHTRKIAIIGTGLVGSSCAYSIVNQGICEELLLIDINHERAVGEAMDLSHCINFTNTRTKVYAGSYEDCKDMDIVIITAGPAPKPGQSRLDTLGASAKIMESVVGGVMESGFDGIFLLASNPVDIITYQVWKLSGLPRNRVIGTGTSLDSSRLRTILSEMLHVDPRSIHGYSLGEHGDSQMVAWSHVTVGGKPILQILEEQKERFGEIDLDEIVEKTAKAGWEIYKRKGTTYYGIGNSLAYIASSIFNDDHRVIAVSAILDGEYGEYDICTGVPAIITRDGIREIVELNLTEDEESRFAKSNDILRDYMKTIGY.

NAD(+) is bound by residues Val16, Asp37, Arg42, and Tyr68. Residue Arg91 coordinates substrate. NAD(+) is bound by residues Ser104, 121 to 123, and Thr146; that span reads ASN. 123–126 provides a ligand contact to substrate; the sequence is NPVD. 151-154 contacts substrate; sequence DSSR. Positions 156 and 171 each coordinate beta-D-fructose 1,6-bisphosphate. Catalysis depends on His178, which acts as the Proton acceptor. Thr233 provides a ligand contact to substrate.

The protein belongs to the LDH/MDH superfamily. LDH family. Homotetramer.

It is found in the cytoplasm. It carries out the reaction (S)-lactate + NAD(+) = pyruvate + NADH + H(+). The protein operates within fermentation; pyruvate fermentation to lactate; (S)-lactate from pyruvate: step 1/1. With respect to regulation, allosterically activated by fructose 1,6-bisphosphate (FBP). In terms of biological role, catalyzes the conversion of lactate to pyruvate. The polypeptide is L-lactate dehydrogenase 3 (Bacillus anthracis).